A 513-amino-acid polypeptide reads, in one-letter code: Tryptophan--tRNA ligase 1 (513 aa).

A 'HIGH' region motif is present at residues 86–94 (PTGDPHIGH). Positions 393–397 (KMSSS) match the 'KMSKS' region motif.

It belongs to the class-I aminoacyl-tRNA synthetase family.

It is found in the cytoplasm. It carries out the reaction tRNA(Trp) + L-tryptophan + ATP = L-tryptophyl-tRNA(Trp) + AMP + diphosphate + H(+). The protein is Tryptophan--tRNA ligase 1 of Halobacterium salinarum (strain ATCC 700922 / JCM 11081 / NRC-1) (Halobacterium halobium).